Reading from the N-terminus, the 140-residue chain is Large ribosomal subunit protein uL11 (140 aa).

Belongs to the universal ribosomal protein uL11 family. In terms of assembly, part of the ribosomal stalk of the 50S ribosomal subunit. Interacts with L10 and the large rRNA to form the base of the stalk. L10 forms an elongated spine to which L12 dimers bind in a sequential fashion forming a multimeric L10(L12)X complex. In terms of processing, one or more lysine residues are methylated.

Forms part of the ribosomal stalk which helps the ribosome interact with GTP-bound translation factors. This is Large ribosomal subunit protein uL11 from Staphylococcus aureus (strain bovine RF122 / ET3-1).